Reading from the N-terminus, the 782-residue chain is Glucocorticoid receptor (782 aa).

Residues 1–20 (MDPKESLTPPSREEIPSSVL) are disordered. The modulating stretch occupies residues 1-425 (MDPKESLTPP…SAATGPPPKL (425 aa)). Thr-8 carries the post-translational modification Phosphothreonine. The residue at position 24 (Arg-24) is an Omega-N-methylarginine. Ser-46 bears the Phosphoserine mark. The segment at 48-79 (SLAAVSQPDSKQQRLAVDFPKGSGSNAQQPDL) is disordered. 6 positions are modified to phosphoserine: Ser-114, Ser-135, Ser-142, Ser-208, Ser-216, and Ser-231. The disordered stretch occupies residues 130-184 (LSRSTSVPENPKSSASAAGPAAPAEKAFPKTHSDGAPEQPNVKGQTGTNGGNVKL). Residues 140–155 (PKSSASAAGPAAPAEK) are compositionally biased toward low complexity. Residue Lys-263 forms a Glycyl lysine isopeptide (Lys-Gly) (interchain with G-Cter in SUMO2) linkage. The residue at position 272 (Ser-272) is a Phosphoserine. Glycyl lysine isopeptide (Lys-Gly) (interchain with G-Cter in SUMO); alternate cross-links involve residues Lys-282 and Lys-298. Residues Lys-282 and Lys-298 each participate in a glycyl lysine isopeptide (Lys-Gly) (interchain with G-Cter in SUMO2); alternate cross-link. Phosphoserine occurs at positions 312 and 410. Lys-424 participates in a covalent cross-link: Glycyl lysine isopeptide (Lys-Gly) (interchain with G-Cter in ubiquitin). 2 consecutive NR C4-type zinc fingers follow at residues 426–446 (CLVCSDEASGCHYGVLTCGSC) and 462–486 (CAGRNDCIIDKIRRKNCPACRYRKC). A DNA-binding region (nuclear receptor) is located at residues 426 to 491 (CLVCSDEASG…RYRKCLQAGM (66 aa)). N6-acetyllysine occurs at positions 485, 497, 499, and 500. Residues 490–782 (GMNLEARKTK…NIKKLLFHQK (293 aa)) are interaction with CLOCK. Positions 492–528 (NLEARKTKKKIKGIQQATTGVSQETSENSANKTIVPA) are hinge. The NR LBD domain maps to 529–763 (TLPQLTPTLV…FPEMLAEIIT (235 aa)). The interaction with CRY1 stretch occupies residues 537–702 (LVSLLEVIEP…EIRMTYIKEL (166 aa)). Lys-708 participates in a covalent cross-link: Glycyl lysine isopeptide (Lys-Gly) (interchain with G-Cter in SUMO).

This sequence belongs to the nuclear hormone receptor family. NR3 subfamily. Heteromultimeric cytoplasmic complex with HSP90AA1, HSPA1A/HSPA1B, and FKBP5 or another immunophilin such as PPID, STIP1, or the immunophilin homolog PPP5C. Upon ligand binding FKBP5 dissociates from the complex and FKBP4 takes its place, thereby linking the complex to dynein and mediating transport to the nucleus, where the complex dissociates. Probably forms a complex composed of chaperones HSP90 and HSP70, co-chaperones CDC37, PPP5C, TSC1 and client protein TSC2, CDK4, AKT, RAF1 and NR3C1; this complex does not contain co-chaperones STIP1/HOP and PTGES3/p23. Directly interacts with UNC45A. Binds to DNA as a homodimer, and as heterodimer with NR3C2 or the retinoid X receptor. Binds STAT5A and STAT5B homodimers and heterodimers. Interacts with NRIP1, POU2F1, POU2F2 and TRIM28. Interacts with several coactivator complexes, including the SMARCA4 complex, CREBBP/EP300, TADA2L (Ada complex) and p160 coactivators such as NCOA2 and NCOA6. Interaction with BAG1 inhibits transactivation. Interacts with HEXIM1 and TGFB1I1. Interacts with NCOA1. Interacts with NCOA3, SMARCA4, SMARCC1, SMARCD1, and SMARCE1. Interacts with CLOCK, CRY1 and CRY2 in a ligand-dependent fashion. Interacts with CIART. Interacts with RWDD3. Interacts with UBE2I/UBC9 and this interaction is enhanced in the presence of RWDD3. Interacts with GRIP1. Interacts with NR4A3 (via nuclear receptor DNA-binding domain), represses transcription activity of NR4A3 on the POMC promoter Nur response element (NurRE). Directly interacts with PNRC2 to attract and form a complex with UPF1 and DCP1A; the interaction leads to rapid mRNA degradation. Interacts with GSK3B. Interacts with FNIP1 and FNIP2. Interacts (via C-terminus) with HNRNPU (via C-terminus). Interacts with MCM3AP. Interacts (via domain NR LBD) with HSP90AA1 and HSP90AB1. In the absence of hormonal ligand, interacts with TACC1. Interacts (via NR LBD domain) with ZNF764 (via KRAB domain); the interaction regulates transcription factor activity of NR3C1 by directing its actions toward certain biologic pathways. Post-translationally, acetylation by CLOCK reduces its binding to glucocorticoid response elements and its transcriptional activity. In terms of processing, increased proteasome-mediated degradation in response to glucocorticoids. Phosphorylated in the absence of hormone; becomes hyperphosphorylated in the presence of glucocorticoid. The Ser-208, Ser-231 and Ser-410-phosphorylated forms are mainly cytoplasmic, and the Ser-216-phosphorylated form is nuclear. Phosphorylation at Ser-216 increases transcriptional activity. Phosphorylation at Ser-208, Ser-231 and Ser-410 decreases signaling capacity. Phosphorylation at Ser-410 may protect from glucocorticoid-induced apoptosis. Phosphorylation at Ser-208 and Ser-216 is not required in regulation of chromosome segregation. May be dephosphorylated by PPP5C, attenuates NR3C1 action. Post-translationally, ubiquitinated by UBR5, leading to its degradation: UBR5 specifically recognizes and binds ligand-bound NR3C1 when it is not associated with coactivators (NCOAs). In presence of NCOAs, the UBR5-degron is not accessible, preventing its ubiquitination and degradation. In terms of processing, sumoylation at Lys-282 and Lys-298 negatively regulates its transcriptional activity. Sumoylation at Lys-708 positively regulates its transcriptional activity in the presence of RWDD3. Sumoylation at Lys-282 and Lys-298 is dispensable whereas sumoylation at Lys-708 is critical for the stimulatory effect of RWDD3 on its transcriptional activity. Heat shock increases sumoylation in a RWDD3-dependent manner.

It is found in the cytoplasm. Its subcellular location is the nucleus. The protein localises to the mitochondrion. The protein resides in the cytoskeleton. It localises to the spindle. It is found in the microtubule organizing center. Its subcellular location is the centrosome. The protein localises to the chromosome. The protein resides in the nucleoplasm. Its function is as follows. Receptor for glucocorticoids (GC). Has a dual mode of action: as a transcription factor that binds to glucocorticoid response elements (GRE), both for nuclear and mitochondrial DNA, and as a modulator of other transcription factors. Affects inflammatory responses, cellular proliferation and differentiation in target tissues. Involved in chromatin remodeling. Plays a role in rapid mRNA degradation by binding to the 5' UTR of target mRNAs and interacting with PNRC2 in a ligand-dependent manner which recruits the RNA helicase UPF1 and the mRNA-decapping enzyme DCP1A, leading to RNA decay. Could act as a coactivator for STAT5-dependent transcription upon growth hormone (GH) stimulation and could reveal an essential role of hepatic GR in the control of body growth. Mediates glucocorticoid-induced apoptosis. Promotes accurate chromosome segregation during mitosis. May act as a tumor suppressor. May play a negative role in adipogenesis through the regulation of lipolytic and antilipogenic gene expression. This is Glucocorticoid receptor (NR3C1) from Sus scrofa (Pig).